A 230-amino-acid polypeptide reads, in one-letter code: Ribonuclease 3 (230 aa).

Residues 6 to 135 enclose the RNase III domain; that stretch reads TTELKERYGI…FLGALYLDQK (130 aa). Glutamate 48 is a binding site for Mg(2+). Aspartate 52 is an active-site residue. Mg(2+)-binding residues include aspartate 121 and glutamate 124. The active site involves glutamate 124. Positions 161–230 constitute a DRBM domain; that stretch reads DHKTQLQEVL…AERALKSIPQ (70 aa).

The protein belongs to the ribonuclease III family. As to quaternary structure, homodimer. Mg(2+) serves as cofactor.

It localises to the cytoplasm. The catalysed reaction is Endonucleolytic cleavage to 5'-phosphomonoester.. Functionally, digests double-stranded RNA. Involved in the processing of primary rRNA transcript to yield the immediate precursors to the large and small rRNAs (23S and 16S). Processes some mRNAs, and tRNAs when they are encoded in the rRNA operon. Processes pre-crRNA and tracrRNA of type II CRISPR loci if present in the organism. In Enterococcus faecalis (strain ATCC 700802 / V583), this protein is Ribonuclease 3.